A 340-amino-acid polypeptide reads, in one-letter code: E3 ubiquitin ligase BIG BROTHER-related (340 aa).

Disordered regions lie at residues 1–56 (MPME…GVGE) and 133–182 (YDED…GNSD). The span at 34–46 (NRQTGVVSDTGSG) shows a compositional bias: polar residues. 2 stretches are compositionally biased toward acidic residues: residues 133 to 164 (YDEDEFDDPENEDEDDDEDEYETDDDPQEDGL) and 173 to 182 (DDQEDDGNSD). An RING-type; atypical zinc finger spans residues 288–329 (CVICRLDYEDDEDLILLPCKHSYHSECINNWLKINKVCPVCS).

In terms of processing, auto-ubiquitinated.

It catalyses the reaction S-ubiquitinyl-[E2 ubiquitin-conjugating enzyme]-L-cysteine + [acceptor protein]-L-lysine = [E2 ubiquitin-conjugating enzyme]-L-cysteine + N(6)-ubiquitinyl-[acceptor protein]-L-lysine.. It participates in protein modification; protein ubiquitination. E3 ubiquitin-ligase probably involved in organ size regulation. In Arabidopsis thaliana (Mouse-ear cress), this protein is E3 ubiquitin ligase BIG BROTHER-related (BBR).